We begin with the raw amino-acid sequence, 82 residues long: Small ribosomal subunit protein bS16 (82 aa).

Belongs to the bacterial ribosomal protein bS16 family.

This Dehalococcoides mccartyi (strain ATCC BAA-2266 / KCTC 15142 / 195) (Dehalococcoides ethenogenes (strain 195)) protein is Small ribosomal subunit protein bS16.